Consider the following 78-residue polypeptide: Small ribosomal subunit protein bS18 (78 aa).

This sequence belongs to the bacterial ribosomal protein bS18 family. Part of the 30S ribosomal subunit. Forms a tight heterodimer with protein bS6.

Binds as a heterodimer with protein bS6 to the central domain of the 16S rRNA, where it helps stabilize the platform of the 30S subunit. In Alkaliphilus oremlandii (strain OhILAs) (Clostridium oremlandii (strain OhILAs)), this protein is Small ribosomal subunit protein bS18.